We begin with the raw amino-acid sequence, 166 residues long: MYCRLNMVYLICALLLIVSLQGTVGARLPQSQKDKEQMLKNVREKIESLQKHYHTTGTEWFGKSVLSSHLHQLNSKASCTCQSLLLDSMLNITETIFQDMRGKAENEETKTSLRDVMTEVKMLRHKYSEEQKVWRELQDIHSVEVNNGKIQKGALNSFLILYDLAY.

The N-terminal stretch at 1–26 is a signal peptide; the sequence is MYCRLNMVYLICALLLIVSLQGTVGA. Asn91 is a glycosylation site (N-linked (GlcNAc...) asparagine).

This sequence belongs to the type II (or gamma) interferon family. As to quaternary structure, homodimer. Strongly expressed in spleen. Also detected at lower levels in gill, kidney, heart, brain and intestine. In immune cell populations, expressed at highest levels in peripheral blood leukocytes and at lower levels in splenocytes, granulocytes, monocytes and macrophages.

The protein resides in the secreted. Its function is as follows. Cytokine which binds to interferon gamma receptor 1 (ifngr1). Has activating effects on primary macrophages. Induces nitric oxide production and phagocytic responses in macrophages. Primes monocytes for production of reactive oxygen intermediates (ROI), although the effect is short-lived. Also has inhibitory effects on monocyte priming by ifng1 (interferon gamma 1) and tnfb (TNF-alpha 2). Stimulates phosphorylation of the JAK/STAT signal transducer stat1, but fails to induce stat1 nuclear localization. Promotes increased expression of a number of genes important for macrophage activity, including the interferon regulatory factors irf2 and irf9. The chain is Interferon gamma-related from Carassius auratus (Goldfish).